A 140-amino-acid polypeptide reads, in one-letter code: Nucleoside diphosphate kinase (140 aa).

ATP-binding residues include Lys-11, Phe-59, Arg-87, Thr-93, Arg-104, and Asn-114. His-117 (pros-phosphohistidine intermediate) is an active-site residue.

The protein belongs to the NDK family. Homotetramer. Requires Mg(2+) as cofactor.

Its subcellular location is the cytoplasm. The catalysed reaction is a 2'-deoxyribonucleoside 5'-diphosphate + ATP = a 2'-deoxyribonucleoside 5'-triphosphate + ADP. The enzyme catalyses a ribonucleoside 5'-diphosphate + ATP = a ribonucleoside 5'-triphosphate + ADP. Functionally, major role in the synthesis of nucleoside triphosphates other than ATP. The ATP gamma phosphate is transferred to the NDP beta phosphate via a ping-pong mechanism, using a phosphorylated active-site intermediate. This chain is Nucleoside diphosphate kinase, found in Xanthobacter autotrophicus (strain ATCC BAA-1158 / Py2).